Reading from the N-terminus, the 461-residue chain is UDP-N-acetylmuramoylalanine--D-glutamate ligase (461 aa).

123–129 (GTNGKTT) provides a ligand contact to ATP.

Belongs to the MurCDEF family.

It is found in the cytoplasm. The catalysed reaction is UDP-N-acetyl-alpha-D-muramoyl-L-alanine + D-glutamate + ATP = UDP-N-acetyl-alpha-D-muramoyl-L-alanyl-D-glutamate + ADP + phosphate + H(+). It participates in cell wall biogenesis; peptidoglycan biosynthesis. Its function is as follows. Cell wall formation. Catalyzes the addition of glutamate to the nucleotide precursor UDP-N-acetylmuramoyl-L-alanine (UMA). This is UDP-N-acetylmuramoylalanine--D-glutamate ligase from Natranaerobius thermophilus (strain ATCC BAA-1301 / DSM 18059 / JW/NM-WN-LF).